We begin with the raw amino-acid sequence, 548 residues long: Elongator complex protein 3 (548 aa).

A Radical SAM core domain is found at 83 to 373; sequence RTASGIAVVA…YRVQRDIPMP (291 aa). [4Fe-4S] cluster contacts are provided by cysteine 100, cysteine 110, and cysteine 113. Residues lysine 165, 475–478, 498–500, and tyrosine 531 contribute to the acetyl-CoA site; these read ELHV and FGM. The N-acetyltransferase domain maps to 397-548; it reads TECRDVRTRE…EGPYMVKNLY (152 aa).

This sequence belongs to the ELP3 family. In terms of assembly, component of the elongator complex. The cofactor is [4Fe-4S] cluster.

The protein localises to the cytoplasm. Its subcellular location is the nucleus. The catalysed reaction is uridine(34) in tRNA + acetyl-CoA + S-adenosyl-L-methionine + H2O = 5-(carboxymethyl)uridine(34) in tRNA + 5'-deoxyadenosine + L-methionine + CoA + 2 H(+). It participates in tRNA modification; 5-methoxycarbonylmethyl-2-thiouridine-tRNA biosynthesis. Catalytic tRNA acetyltransferase subunit of the elongator complex which is required for multiple tRNA modifications, including mcm5U (5-methoxycarbonylmethyl uridine), mcm5s2U (5-methoxycarbonylmethyl-2-thiouridine), and ncm5U (5-carbamoylmethyl uridine). In the elongator complex, acts as a tRNA uridine(34) acetyltransferase by mediating formation of carboxymethyluridine in the wobble base at position 34 in tRNAs. Involved in neurogenesis. Involved in somite development. This Danio rerio (Zebrafish) protein is Elongator complex protein 3.